A 283-amino-acid chain; its full sequence is uncharacterized protein (283 aa).

N-linked (GlcNAc...) asparagine glycosylation occurs at N15. The PQ-loop 1 domain maps to 15–81; that stretch reads NATASTVFAI…QELNIALKVQ (67 aa). A run of 6 helical transmembrane segments spans residues 19–39, 48–68, 108–128, 138–158, 170–190, and 206–226; these read STVF…PQII, EGLD…LSVY, ALFV…MLIL, VEWP…IGFL, VTGI…FSFL, and GLLF…NVLL. One can recognise a PQ-loop 2 domain in the interval 149 to 204; the sequence is ATVLVNIGFLPQYISIFRARAVTGISYLFLAIDSSGSLFSFLSLPFDRWDVLAAVD. An N-linked (GlcNAc...) asparagine glycan is attached at N228.

It is found in the membrane. This is an uncharacterized protein from Schizosaccharomyces pombe (strain 972 / ATCC 24843) (Fission yeast).